A 269-amino-acid chain; its full sequence is 4-hydroxy-tetrahydrodipicolinate reductase (269 aa).

Residues 8 to 13 (GAAGRM) and glutamate 34 each bind NAD(+). Arginine 35 provides a ligand contact to NADP(+). NAD(+) is bound by residues 98 to 100 (GTT) and 122 to 125 (APNY). Catalysis depends on histidine 155, which acts as the Proton donor/acceptor. Histidine 156 serves as a coordination point for (S)-2,3,4,5-tetrahydrodipicolinate. Catalysis depends on lysine 159, which acts as the Proton donor. 165 to 166 (GT) is a binding site for (S)-2,3,4,5-tetrahydrodipicolinate.

It belongs to the DapB family.

The protein localises to the cytoplasm. The enzyme catalyses (S)-2,3,4,5-tetrahydrodipicolinate + NAD(+) + H2O = (2S,4S)-4-hydroxy-2,3,4,5-tetrahydrodipicolinate + NADH + H(+). The catalysed reaction is (S)-2,3,4,5-tetrahydrodipicolinate + NADP(+) + H2O = (2S,4S)-4-hydroxy-2,3,4,5-tetrahydrodipicolinate + NADPH + H(+). The protein operates within amino-acid biosynthesis; L-lysine biosynthesis via DAP pathway; (S)-tetrahydrodipicolinate from L-aspartate: step 4/4. Its function is as follows. Catalyzes the conversion of 4-hydroxy-tetrahydrodipicolinate (HTPA) to tetrahydrodipicolinate. The sequence is that of 4-hydroxy-tetrahydrodipicolinate reductase from Vibrio campbellii (strain ATCC BAA-1116).